Reading from the N-terminus, the 934-residue chain is 3-hydroxy-3-methylglutaryl-coenzyme A reductase (934 aa).

Residues Met1–Thr111 are Lumenal-facing. The helical transmembrane segment at Phe112–Phe132 threads the bilayer. The region spanning Asp113 to Leu280 is the SSD domain. Topologically, residues Ala133–Lys141 are cytoplasmic. The helical transmembrane segment at Val142 to Ile162 threads the bilayer. Residues Thr163–Asp168 lie on the Lumenal side of the membrane. A helical membrane pass occupies residues Leu169 to Phe189. Topologically, residues Asn190–Asp231 are cytoplasmic. The chain crosses the membrane as a helical span at residues His232–Leu252. Residues Lys253–Cys256 lie on the Lumenal side of the membrane. The helical transmembrane segment at Ile257 to Ile277 threads the bilayer. Over Leu278 to Lys334 the chain is Cytoplasmic. A helical transmembrane segment spans residues Val335–Ser355. Residues Asp356–Lys421 are Lumenal-facing. Residues Asn361, Asn364, and Asn382 are each glycosylated (N-linked (GlcNAc...) asparagine). The helical transmembrane segment at Tyr422–Leu442 threads the bilayer. Residues Asn443 to Lys934 are Cytoplasmic-facing. The active-site Charge relay system is Glu618. Ser624–Lys630 contributes to the CoA binding site. NADP(+)-binding positions include Ser685–Phe687 and Asp712–Ser720. The Charge relay system role is filled by Lys752. Val781–Lys783 contacts CoA. Asp828 acts as the Charge relay system in catalysis. Position 923–924 (Ser923–His924) interacts with CoA. The active-site Proton donor is the His924. Asn928 to Arg929 is an NADP(+) binding site.

This sequence belongs to the HMG-CoA reductase family.

Its subcellular location is the endoplasmic reticulum membrane. The enzyme catalyses (R)-mevalonate + 2 NADP(+) + CoA = (3S)-3-hydroxy-3-methylglutaryl-CoA + 2 NADPH + 2 H(+). It functions in the pathway metabolic intermediate biosynthesis; (R)-mevalonate biosynthesis; (R)-mevalonate from acetyl-CoA: step 3/3. HMG-CoA reductase; part of the first module of ergosterol biosynthesis pathway that includes the early steps of the pathway, conserved across all eukaryotes, and which results in the formation of mevalonate from acetyl-coenzyme A (acetyl-CoA). In this module, the cytosolic acetyl-CoA acetyltransferase catalyzes the formation of acetoacetyl-CoA. The hydroxymethylglutaryl-CoA synthase then condenses acetyl-CoA with acetoacetyl-CoA to form HMG-CoA. The rate-limiting step of the early module is the reduction to mevalonate by the 3-hydroxy-3-methylglutaryl-coenzyme A (HMG-CoA) reductase. The chain is 3-hydroxy-3-methylglutaryl-coenzyme A reductase from Cyberlindnera jadinii (Torula yeast).